Here is a 593-residue protein sequence, read N- to C-terminus: Mitoguardin 2 (593 aa).

A run of 2 helical transmembrane segments spans residues 11 to 31 (MIQALAMTVAEIPVFLYTTFG) and 42 to 62 (PGLRKVLFATALGTVALALAA). 2 disordered regions span residues 101–134 (KKGYSNRRVQSPSSKSNDTLSGISSIEPSKHSGS) and 195–228 (LSVGQRGDSGSTPTPGDGLRNPETASEALSEPES). Over residues 107–123 (RRVQSPSSKSNDTLSGI) the composition is skewed to polar residues. Low complexity predominate over residues 124–134 (SSIEPSKHSGS). Serine 132 is subject to Phosphoserine. Position 206 is a phosphothreonine (threonine 206). Residues serine 220, serine 224, and serine 228 each carry the phosphoserine modification. Threonine 273 is modified (phosphothreonine). 2 positions are modified to phosphoserine: serine 276 and serine 295. Residues 292–298 (SFFSATE) carry the FFAT motif. The chain crosses the membrane as a helical span at residues 563 to 583 (ILLGYLGVPAASSIGLNGVLP).

Belongs to the mitoguardin family. In terms of assembly, homodimer and heterodimer; forms heterodimers with MIGA1. Interacts with PLD6/MitoPLD. Interacts (via phosphorylated FFAT motif) with MOSPD2. Phosphorylation at Ser-295 of the FFAT motif activates interaction with MOSPD2.

It localises to the mitochondrion outer membrane. Functionally, regulator of mitochondrial fusion: acts by forming homo- and heterodimers at the mitochondrial outer membrane and facilitating the formation of PLD6/MitoPLD dimers. May act by regulating phospholipid metabolism via PLD6/MitoPLD. The protein is Mitoguardin 2 of Bos taurus (Bovine).